Reading from the N-terminus, the 1021-residue chain is Sodium/potassium-transporting ATPase subunit alpha-1 (1021 aa).

A propeptide spanning residues 1–5 (MGKGG) is cleaved from the precursor. Positions 1 to 11 (MGKGGGRDKYE) are enriched in basic and acidic residues. The disordered stretch occupies residues 1–37 (MGKGGGRDKYEPAAISEHGNKKKAKKERDMDELKKEV). The Cytoplasmic portion of the chain corresponds to 6 to 85 (GRDKYEPAAI…NALTPPPTTP (80 aa)). Lysine 9 is modified (N6-acetyllysine). Tyrosine 10 carries the post-translational modification Phosphotyrosine. Serine 16 is subject to Phosphoserine; by PKC. N6-acetyllysine is present on lysine 21. Residues 26–37 (KERDMDELKKEV) show a composition bias toward basic and acidic residues. Serine 38 and serine 45 each carry phosphoserine. Residues 80 to 82 (PPP) are phosphoinositide-3 kinase binding. Residues 86–106 (EWVKFCRQLFGGFSMLLWIGA) form a helical membrane-spanning segment. The Extracellular portion of the chain corresponds to 107–129 (ILCFLAYGIQAATEEEPQNDNLY). The chain crosses the membrane as a helical span at residues 130–150 (LGVVLSAVVIITGCFSYYQEA). Residues 151–286 (KSSKIMESFK…GGQTPIAAEI (136 aa)) are Cytoplasmic-facing. Residues 214 to 233 (SSLTGESEPQTRSPDFTNEN) form a disordered region. Position 226 is a phosphoserine (serine 226). The residue at position 258 (tyrosine 258) is a Phosphotyrosine. Residues 287 to 306 (EHFIHIITGVAVFLGVTFFI) form a helical membrane-spanning segment. Residues 307-318 (LSLILEYTWLEA) are Extracellular-facing. The chain crosses the membrane as a helical span at residues 319–336 (VIFLIGIIVANVPEGLLA). Topologically, residues 337–770 (TVTVCLTLTA…EEGRLIFDNL (434 aa)) are cytoplasmic. The active-site 4-aspartylphosphate intermediate is aspartate 374. Residues serine 450 and serine 482 each carry the phosphoserine modification. Lysine 485 is an ATP binding site. Tyrosine 540 bears the Phosphotyrosine mark. The tract at residues 594–715 (RAAVPDAVGK…QGAIVAVTGD (122 aa)) is mediates interaction with SCN7A. The residue at position 659 (lysine 659) is an N6-succinyllysine. Position 666 is a phosphoserine (serine 666). 2 residues coordinate Mg(2+): aspartate 715 and aspartate 719. Residues 771–790 (KKSIAYTLTSNIPEITPFLI) traverse the membrane as a helical segment. At 791 to 800 (FIIANIPLPL) the chain is on the extracellular side. Residues 801–821 (GTVTILCIDLGTDMVPAISLA) traverse the membrane as a helical segment. Over 822–841 (YEQAESDIMKRQPRNPQTDK) the chain is Cytoplasmic. The helical transmembrane segment at 842 to 864 (LVNERLISMAYGQIGMIQALGGF) threads the bilayer. Over 865-916 (FTYFVILAENGFLPIHLLGLRVDWDDRWVNDVEDSYGQQWTYEQRKIVEFTC) the chain is Extracellular. A helical membrane pass occupies residues 917–936 (HTAFFVSIVVVQWADLVICK). At 937–949 (TRRNSVFQQGMKN) the chain is on the cytoplasmic side. Serine 941 carries the post-translational modification Phosphoserine; by PKA. The helical transmembrane segment at 950 to 968 (KILIFGLFEETALAAFLSY) threads the bilayer. The Extracellular portion of the chain corresponds to 969–983 (CPGMGVALRMYPLKP). The chain crosses the membrane as a helical span at residues 984–1004 (TWWFCAFPYSLLIFVYDEVRK). Topologically, residues 1005–1021 (LIIRRRPGGWVEKETYY) are cytoplasmic.

It belongs to the cation transport ATPase (P-type) (TC 3.A.3) family. Type IIC subfamily. In terms of assembly, the sodium/potassium-transporting ATPase is composed of a catalytic alpha subunit, an auxiliary non-catalytic beta subunit and an additional regulatory subunit. Interacts with regulatory subunit FXYD1. Interacts with regulatory subunit FXYD3. Interacts with SIK1. Interacts with SLC35G1 and STIM1. Interacts with CLN3; this interaction regulates the sodium/potassium-transporting ATPase complex localization at the plasma membrane. Interacts with SCN7A; activates ATP1A1 P-type sodium:potassium-exchanging transporter activity which indirectly signals to nearby neurons to regulate sodium homeostasis. Phosphorylation on Tyr-10 modulates pumping activity. Phosphorylation of Ser-941 by PKA modulates the response of ATP1A1 to PKC. Dephosphorylation by protein phosphatase 2A (PP2A) following increases in intracellular sodium, leading to increase catalytic activity.

Its subcellular location is the cell membrane. The protein localises to the basolateral cell membrane. It is found in the sarcolemma. The protein resides in the cell projection. It localises to the axon. Its subcellular location is the melanosome. It carries out the reaction K(+)(out) + Na(+)(in) + ATP + H2O = K(+)(in) + Na(+)(out) + ADP + phosphate + H(+). Its function is as follows. This is the catalytic component of the active enzyme, which catalyzes the hydrolysis of ATP coupled with the exchange of sodium and potassium ions across the plasma membrane. This action creates the electrochemical gradient of sodium and potassium ions, providing the energy for active transport of various nutrients. Could also be part of an osmosensory signaling pathway that senses body-fluid sodium levels and controls salt intake behavior as well as voluntary water intake to regulate sodium homeostasis. The sequence is that of Sodium/potassium-transporting ATPase subunit alpha-1 (ATP1A1) from Equus caballus (Horse).